Reading from the N-terminus, the 289-residue chain is Probable early E4 33 kDa protein (289 aa).

It belongs to the adenoviridae E4 30 to 34 kDa protein family. As to quaternary structure, interacts with E1B-55k.

It is found in the host nucleus. The protein resides in the host cytoplasm. Functionally, plays a major role to prevent cellular inhibition of viral genome replication by nuclear bodies. Assembles an SCF-like E3 ubiquitin ligase complex based on the cellular proteins ELOB, ELOC, CUL5 and RBX1, in cooperation with viral E1B-55K. This viral RING-type ligase ubiquitinates cellular substrates prior to proteasomal degradation: p53/TP53, LIG4, MRE11-RAD50-NBS1 (MRN) complex, ITGA3, DAXX and BLM. In Mus musculus (Mouse), this protein is Probable early E4 33 kDa protein.